Reading from the N-terminus, the 255-residue chain is Ribosomal RNA small subunit methyltransferase A (255 aa).

6 residues coordinate S-adenosyl-L-methionine: Asn-12, Leu-14, Gly-39, Glu-60, Asp-84, and Asn-106.

It belongs to the class I-like SAM-binding methyltransferase superfamily. rRNA adenine N(6)-methyltransferase family. RsmA subfamily.

Its subcellular location is the cytoplasm. The catalysed reaction is adenosine(1518)/adenosine(1519) in 16S rRNA + 4 S-adenosyl-L-methionine = N(6)-dimethyladenosine(1518)/N(6)-dimethyladenosine(1519) in 16S rRNA + 4 S-adenosyl-L-homocysteine + 4 H(+). In terms of biological role, specifically dimethylates two adjacent adenosines (A1518 and A1519) in the loop of a conserved hairpin near the 3'-end of 16S rRNA in the 30S particle. May play a critical role in biogenesis of 30S subunits. In Janthinobacterium sp. (strain Marseille) (Minibacterium massiliensis), this protein is Ribosomal RNA small subunit methyltransferase A.